The primary structure comprises 186 residues: Ribosome-recycling factor (186 aa).

The protein belongs to the RRF family.

It is found in the cytoplasm. Responsible for the release of ribosomes from messenger RNA at the termination of protein biosynthesis. May increase the efficiency of translation by recycling ribosomes from one round of translation to another. This chain is Ribosome-recycling factor, found in Brucella abortus (strain S19).